The chain runs to 370 residues: Anhydro-N-acetylmuramic acid kinase (370 aa).

Residue 13–20 (GTSMDGVD) coordinates ATP.

Belongs to the anhydro-N-acetylmuramic acid kinase family.

It catalyses the reaction 1,6-anhydro-N-acetyl-beta-muramate + ATP + H2O = N-acetyl-D-muramate 6-phosphate + ADP + H(+). Its pathway is amino-sugar metabolism; 1,6-anhydro-N-acetylmuramate degradation. It functions in the pathway cell wall biogenesis; peptidoglycan recycling. Its function is as follows. Catalyzes the specific phosphorylation of 1,6-anhydro-N-acetylmuramic acid (anhMurNAc) with the simultaneous cleavage of the 1,6-anhydro ring, generating MurNAc-6-P. Is required for the utilization of anhMurNAc either imported from the medium or derived from its own cell wall murein, and thus plays a role in cell wall recycling. The chain is Anhydro-N-acetylmuramic acid kinase from Shewanella denitrificans (strain OS217 / ATCC BAA-1090 / DSM 15013).